A 320-amino-acid polypeptide reads, in one-letter code: 2-oxoglutarate-dependent dioxygenase thnC (320 aa).

The Fe2OG dioxygenase domain maps to 174-278 (PLVQMKLIRY…HSCATFWHGD (105 aa)). 3 residues coordinate Fe cation: H199, D201, and H258. R268 serves as a coordination point for 2-oxoglutarate.

The protein belongs to the iron/ascorbate-dependent oxidoreductase family. Fe(2+) is required as a cofactor.

It catalyses the reaction trihazone A + 2-oxoglutarate + O2 + H(+) = trihazone D + succinate + 2 CO2 + H2O. It functions in the pathway secondary metabolite biosynthesis. 2-oxoglutarate-dependent dioxygenase; part of the gene cluster that produces the tetronate natural products trihazones. ThnC catalyzes the oxidative decarboxylation of trihazone A to trihazone D. The C4 hydrogen is first abstracted by the iron-oxo species generated in ThnC to give a tertiary radical at C4. This is followed by decarboxylation and removal of the second electron by the FeIII-OH center to give trihazone D. The pathway begins with the formation of trihazone A by the hybrid PKS-NRPS synthetase thnA and the trans-enoyl reductase thnE. Trihazone A is further decarboxylated by the 2-oxoglutarate-dependent dioxygenase thnC to produce trihazone D. The function of the FAD-dependent monooxygenase thnD has still to be identified. This chain is 2-oxoglutarate-dependent dioxygenase thnC, found in Trichoderma harzianum (Hypocrea lixii).